Consider the following 618-residue polypeptide: DNA mismatch repair protein MutL (618 aa).

Residues 366 to 378 (AEPTAAREPATPR) are compositionally biased toward low complexity. A disordered region spans residues 366 to 403 (AEPTAAREPATPRYSDGASGGNGGRQSAGGWPHAQPGY). Residues 383 to 392 (ASGGNGGRQS) are compositionally biased toward gly residues.

Belongs to the DNA mismatch repair MutL/HexB family.

Functionally, this protein is involved in the repair of mismatches in DNA. It is required for dam-dependent methyl-directed DNA mismatch repair. May act as a 'molecular matchmaker', a protein that promotes the formation of a stable complex between two or more DNA-binding proteins in an ATP-dependent manner without itself being part of a final effector complex. This Salmonella typhi protein is DNA mismatch repair protein MutL.